Reading from the N-terminus, the 178-residue chain is Ribosome maturation factor RimP (178 aa).

It belongs to the RimP family.

The protein resides in the cytoplasm. Functionally, required for maturation of 30S ribosomal subunits. The chain is Ribosome maturation factor RimP from Corynebacterium glutamicum (strain ATCC 13032 / DSM 20300 / JCM 1318 / BCRC 11384 / CCUG 27702 / LMG 3730 / NBRC 12168 / NCIMB 10025 / NRRL B-2784 / 534).